A 611-amino-acid chain; its full sequence is Leukotriene A-4 hydrolase (611 aa).

At Lys73 the chain carries N6-acetyllysine. Residues 135–137 (QCQ) and 267–272 (PYGGME) each bind a peptide. His296 serves as a coordination point for Zn(2+). The active-site Proton acceptor is the Glu297. Positions 300 and 319 each coordinate Zn(2+). The residue at position 337 (Lys337) is an N6-acetyllysine. Tyr384 (proton donor) is an active-site residue. Lys414 bears the N6-acetyllysine mark. At Ser416 the chain carries Phosphoserine. 564–566 (RMK) contributes to the a peptide binding site. Lys573 carries the N6-acetyllysine modification.

It belongs to the peptidase M1 family. Monomer. Zn(2+) serves as cofactor. Phosphorylation at Ser-416 inhibits leukotriene-A4 hydrolase activity.

It is found in the cytoplasm. The enzyme catalyses leukotriene A4 + H2O = leukotriene B4. The catalysed reaction is (5S,6S)-epoxy-(18R)-hydroxy-(7E,9E,11Z,14Z,16E)-eicosapentaenoate + H2O = resolvin E1. It catalyses the reaction (5S,6S)-epoxy-(18S)-hydroxy-(7E,9E,11Z,14Z,16E)-eicosapentaenoate + H2O = 18S-resolvin E1. It carries out the reaction Release of the N-terminal residue from a tripeptide.. It participates in lipid metabolism; leukotriene B4 biosynthesis. Its activity is regulated as follows. Inhibited by bestatin. The epoxide hydrolase activity is restrained by suicide inactivation that involves binding of LTA4 to Tyr-379. 4-(4-benzylphenyl)thiazol-2-amine (ARM1) selectively inhibits the epoxide hydrolase activity. Functionally, bifunctional zinc metalloenzyme that comprises both epoxide hydrolase (EH) and aminopeptidase activities. Acts as an epoxide hydrolase to catalyze the conversion of LTA4 to the pro-inflammatory mediator leukotriene B4 (LTB4). Also has aminopeptidase activity, with high affinity for N-terminal arginines of various synthetic tripeptides. In addition to its pro-inflammatory EH activity, may also counteract inflammation by its aminopeptidase activity, which inactivates by cleavage another neutrophil attractant, the tripeptide Pro-Gly-Pro (PGP), a bioactive fragment of collagen generated by the action of matrix metalloproteinase-9 (MMP9) and prolylendopeptidase (PREPL). Involved also in the biosynthesis of resolvin E1 and 18S-resolvin E1 from eicosapentaenoic acid, two lipid mediators that show potent anti-inflammatory and pro-resolving actions. The sequence is that of Leukotriene A-4 hydrolase (Lta4h) from Mus musculus (Mouse).